Here is a 778-residue protein sequence, read N- to C-terminus: Lon protease (778 aa).

Residues 6 to 207 (LPLMALRDMV…TVISMLNSNI (202 aa)) form the Lon N-terminal domain. Position 356–363 (356–363 (GPPGVGKT)) interacts with ATP. The Lon proteolytic domain maps to 592–773 (EDQIGSTTGL…DQVLKHALVG (182 aa)). Active-site residues include S679 and K722.

It belongs to the peptidase S16 family. Homohexamer. Organized in a ring with a central cavity.

The protein localises to the cytoplasm. The catalysed reaction is Hydrolysis of proteins in presence of ATP.. ATP-dependent serine protease that mediates the selective degradation of mutant and abnormal proteins as well as certain short-lived regulatory proteins. Required for cellular homeostasis and for survival from DNA damage and developmental changes induced by stress. Degrades polypeptides processively to yield small peptide fragments that are 5 to 10 amino acids long. Binds to DNA in a double-stranded, site-specific manner. This is Lon protease from Rickettsia conorii (strain ATCC VR-613 / Malish 7).